A 95-amino-acid chain; its full sequence is Aspartyl/glutamyl-tRNA(Asn/Gln) amidotransferase subunit C (95 aa).

The protein belongs to the GatC family. As to quaternary structure, heterotrimer of A, B and C subunits.

The enzyme catalyses L-glutamyl-tRNA(Gln) + L-glutamine + ATP + H2O = L-glutaminyl-tRNA(Gln) + L-glutamate + ADP + phosphate + H(+). It catalyses the reaction L-aspartyl-tRNA(Asn) + L-glutamine + ATP + H2O = L-asparaginyl-tRNA(Asn) + L-glutamate + ADP + phosphate + 2 H(+). In terms of biological role, allows the formation of correctly charged Asn-tRNA(Asn) or Gln-tRNA(Gln) through the transamidation of misacylated Asp-tRNA(Asn) or Glu-tRNA(Gln) in organisms which lack either or both of asparaginyl-tRNA or glutaminyl-tRNA synthetases. The reaction takes place in the presence of glutamine and ATP through an activated phospho-Asp-tRNA(Asn) or phospho-Glu-tRNA(Gln). This chain is Aspartyl/glutamyl-tRNA(Asn/Gln) amidotransferase subunit C, found in Magnetococcus marinus (strain ATCC BAA-1437 / JCM 17883 / MC-1).